The primary structure comprises 125 residues: Urotensin-2 (125 aa).

A signal peptide spans 1 to 20 (MYKLASCCLLFIGFLNPLFS). The propeptide occupies 21–111 (LPLLDSGEVS…HLLARIRKPY (91 aa)). A disulfide bond links C119 and C124.

It belongs to the urotensin-2 family.

The protein localises to the secreted. Its function is as follows. Highly potent vasoconstrictor. This Macaca mulatta (Rhesus macaque) protein is Urotensin-2 (UTS2).